Reading from the N-terminus, the 801-residue chain is MSSALEVEGSGSPGVEPAATATASRLKRHDSLFGDAEKVSGGKHHGGSAVSWAVTLHLAFQSVGIIYGDIGTSPLYVYSSTFPDGIGHRDDLVGVLSLILYTLIIIPMLKYVFIVLYANDNGDGGTFALYSLISRYAKIRMIPNQQAEDAMVSNYSIEAPSSQLRRAQWVKHKLESSRAAKMALFFLTILGTSMVMGDGTLTPAISVLSAVSGIREKAPNLTQTQVVLISVAILFMLFSVQRFGTDKVGYTFAPIISVWFLLIAGIGLYNLVVHEITILKAFNPWYIVQYFRRNGKKGWVSLGGVVLCVTGTEGMFADLGHFNIRAVQISFNCILFPSVALCYIGQAAYLRKFPENVSDTFYKSIPGKYRDRLNFGPLFWPTFIVAILAAIIASQAMLSGAFAILSKALSLGCLPRVRVIHTSKKYEGQVYIPEVNFMMGLASIIVTIAFRTTTSIGNAYGICVVTTFMVTTHLMTVVMLLIWKKHLVFILLFYCVFGFTEVVYLSSILSKFVDGGYLPFCFAMVLMTMMATWHYVHVRRYWYELDHIVPTAELASLLEENGGVRRVPGVGLLYTELVQGIPPLFPRLVRKIPSVHAVFVFISIKHLPIPHVAAAERFLFRQVGPRARRVFRCVARYGYTDALEEPREFAAFLVDGLKMFIQEESAFAPHQEMIDAAADDDDEAAARPRRSTSSAVHSEEAIQAASSGRTTASSVQLQAGGEPPAAMDVEEEKRLIDREVGRGVVYLMGEANVSAGPNSSILKRIAVNYIYTFLRKNLTEGHRALAIPNDQLLKVGITYEI.

The segment at 1–20 (MSSALEVEGSGSPGVEPAAT) is disordered. Over 1–57 (MSSALEVEGSGSPGVEPAATATASRLKRHDSLFGDAEKVSGGKHHGGSAVSWAVTLH) the chain is Cytoplasmic. Residues 58 to 80 (LAFQSVGIIYGDIGTSPLYVYSS) traverse the membrane as a helical segment. Residues 81–94 (TFPDGIGHRDDLVG) lie on the Extracellular side of the membrane. Residues 95-115 (VLSLILYTLIIIPMLKYVFIV) traverse the membrane as a helical segment. At 116–181 (LYANDNGDGG…HKLESSRAAK (66 aa)) the chain is on the cytoplasmic side. The helical transmembrane segment at 182–202 (MALFFLTILGTSMVMGDGTLT) threads the bilayer. Residues 203-219 (PAISVLSAVSGIREKAP) lie on the Extracellular side of the membrane. Residues 220-240 (NLTQTQVVLISVAILFMLFSV) traverse the membrane as a helical segment. The Cytoplasmic segment spans residues 241-247 (QRFGTDK). Residues 248-268 (VGYTFAPIISVWFLLIAGIGL) form a helical membrane-spanning segment. Residues 269 to 298 (YNLVVHEITILKAFNPWYIVQYFRRNGKKG) are Extracellular-facing. The helical transmembrane segment at 299–319 (WVSLGGVVLCVTGTEGMFADL) threads the bilayer. Residues 320-328 (GHFNIRAVQ) lie on the Cytoplasmic side of the membrane. A helical membrane pass occupies residues 329–349 (ISFNCILFPSVALCYIGQAAY). Topologically, residues 350-375 (LRKFPENVSDTFYKSIPGKYRDRLNF) are extracellular. A helical membrane pass occupies residues 376–398 (GPLFWPTFIVAILAAIIASQAML). Residues 399–429 (SGAFAILSKALSLGCLPRVRVIHTSKKYEGQ) lie on the Cytoplasmic side of the membrane. A helical membrane pass occupies residues 430-450 (VYIPEVNFMMGLASIIVTIAF). Residues 451–461 (RTTTSIGNAYG) are Extracellular-facing. A helical membrane pass occupies residues 462 to 482 (ICVVTTFMVTTHLMTVVMLLI). The Cytoplasmic portion of the chain corresponds to 483 to 487 (WKKHL). Residues 488–508 (VFILLFYCVFGFTEVVYLSSI) traverse the membrane as a helical segment. The Extracellular segment spans residues 509 to 511 (LSK). A helical membrane pass occupies residues 512-532 (FVDGGYLPFCFAMVLMTMMAT). At 533 to 801 (WHYVHVRRYW…LLKVGITYEI (269 aa)) the chain is on the cytoplasmic side. Residues 679–728 (DDDDEAAARPRRSTSSAVHSEEAIQAASSGRTTASSVQLQAGGEPPAAMD) are disordered. Positions 704-717 (AASSGRTTASSVQL) are enriched in polar residues.

It belongs to the HAK/KUP transporter (TC 2.A.72.3) family. As to expression, expressed almost exclusively in roots.

The protein resides in the cell membrane. Its function is as follows. High-affinity potassium transporter. Also transports rubidium, with the same affinity and cesium, with a lower affinity. This is Potassium transporter 1 (HAK1) from Oryza sativa subsp. japonica (Rice).